Reading from the N-terminus, the 418-residue chain is Light-independent protochlorophyllide reductase subunit N (418 aa).

[4Fe-4S] cluster contacts are provided by cysteine 17, cysteine 42, and cysteine 103.

Belongs to the BchN/ChlN family. In terms of assembly, protochlorophyllide reductase is composed of three subunits; ChlL, ChlN and ChlB. Forms a heterotetramer of two ChlB and two ChlN subunits. [4Fe-4S] cluster is required as a cofactor.

The enzyme catalyses chlorophyllide a + oxidized 2[4Fe-4S]-[ferredoxin] + 2 ADP + 2 phosphate = protochlorophyllide a + reduced 2[4Fe-4S]-[ferredoxin] + 2 ATP + 2 H2O. It functions in the pathway porphyrin-containing compound metabolism; chlorophyll biosynthesis (light-independent). Component of the dark-operative protochlorophyllide reductase (DPOR) that uses Mg-ATP and reduced ferredoxin to reduce ring D of protochlorophyllide (Pchlide) to form chlorophyllide a (Chlide). This reaction is light-independent. The NB-protein (ChlN-ChlB) is the catalytic component of the complex. This Prochlorococcus marinus (strain MIT 9303) protein is Light-independent protochlorophyllide reductase subunit N.